A 406-amino-acid polypeptide reads, in one-letter code: MDLCEESETFLENKENKKIEDAEETALTFHCPDERSERNHVCCLLGVSELTLEEDGRASEFTISTGWEEAVHGWGRTSPTACIWSKKKVRRGRVGEGTSGGSNCLFCMSLSQGSLEPRPLSAAGKLEEAAVAEVSSQKNWGSEKNWNSPSQGPASREPNKLCFPTYLHGEKKSLQMKEFIWCMEEWGIPEAVSSKACRNPSSSTDQGLSISDAVATKALVVLPPLKSSSHNLDSLSKKSRNIFWQPEEKVLGVEKDECMACPDELKGVDGKGEKAHFELASRLKVTNILPFPPTVTRTHLLSAESQRCCLHWSLLPQKSSVFPPNPTNIHYLATLQVLGQQGGQNCRTRLKAKEAKPPRTTPKHIVTEAKQESRPHVLESKVFPKPLLPSLTVSRVVIPVSTHRVL.

The span at 136 to 153 (SQKNWGSEKNWNSPSQGP) shows a compositional bias: polar residues. Residues 136–157 (SQKNWGSEKNWNSPSQGPASRE) form a disordered region.

This is an uncharacterized protein from Rattus norvegicus (Rat).